Here is a 100-residue protein sequence, read N- to C-terminus: Aspartyl/glutamyl-tRNA(Asn/Gln) amidotransferase subunit C (100 aa).

The protein belongs to the GatC family. As to quaternary structure, heterotrimer of A, B and C subunits.

The catalysed reaction is L-glutamyl-tRNA(Gln) + L-glutamine + ATP + H2O = L-glutaminyl-tRNA(Gln) + L-glutamate + ADP + phosphate + H(+). The enzyme catalyses L-aspartyl-tRNA(Asn) + L-glutamine + ATP + H2O = L-asparaginyl-tRNA(Asn) + L-glutamate + ADP + phosphate + 2 H(+). Allows the formation of correctly charged Asn-tRNA(Asn) or Gln-tRNA(Gln) through the transamidation of misacylated Asp-tRNA(Asn) or Glu-tRNA(Gln) in organisms which lack either or both of asparaginyl-tRNA or glutaminyl-tRNA synthetases. The reaction takes place in the presence of glutamine and ATP through an activated phospho-Asp-tRNA(Asn) or phospho-Glu-tRNA(Gln). The polypeptide is Aspartyl/glutamyl-tRNA(Asn/Gln) amidotransferase subunit C (Streptococcus agalactiae serotype Ia (strain ATCC 27591 / A909 / CDC SS700)).